The following is a 193-amino-acid chain: Holliday junction branch migration complex subunit RuvA (193 aa).

The tract at residues 1-64 (MIGRIAGVLL…EDAHLLYGFG (64 aa)) is domain I. The segment at 65-139 (TAEERSTFRE…GKIGADLGAM (75 aa)) is domain II. Residues 139-143 (MAGAA) form a flexible linker region. A domain III region spans residues 144–193 (SASDHASDILNALLALGYSEKEALAAVKNVPAGTGVSEGIKLALKALSKG).

This sequence belongs to the RuvA family. As to quaternary structure, homotetramer. Forms an RuvA(8)-RuvB(12)-Holliday junction (HJ) complex. HJ DNA is sandwiched between 2 RuvA tetramers; dsDNA enters through RuvA and exits via RuvB. An RuvB hexamer assembles on each DNA strand where it exits the tetramer. Each RuvB hexamer is contacted by two RuvA subunits (via domain III) on 2 adjacent RuvB subunits; this complex drives branch migration. In the full resolvosome a probable DNA-RuvA(4)-RuvB(12)-RuvC(2) complex forms which resolves the HJ.

It is found in the cytoplasm. In terms of biological role, the RuvA-RuvB-RuvC complex processes Holliday junction (HJ) DNA during genetic recombination and DNA repair, while the RuvA-RuvB complex plays an important role in the rescue of blocked DNA replication forks via replication fork reversal (RFR). RuvA specifically binds to HJ cruciform DNA, conferring on it an open structure. The RuvB hexamer acts as an ATP-dependent pump, pulling dsDNA into and through the RuvAB complex. HJ branch migration allows RuvC to scan DNA until it finds its consensus sequence, where it cleaves and resolves the cruciform DNA. This Paraburkholderia xenovorans (strain LB400) protein is Holliday junction branch migration complex subunit RuvA.